We begin with the raw amino-acid sequence, 121 residues long: MLLSNKIKHSIFQFFVFPFYYFLLIITEIGFSSCIQYSGLSAYFPIKCTLSLLSSPIRRVQVISDSLNVKGKRLLLVVTAHSRLRVNADIGGLISNIGCGKRPTILSTVNTGSNTSREGKS.

Residues 11–31 (IFQFFVFPFYYFLLIITEIGF) form a helical membrane-spanning segment.

The protein localises to the membrane. This is an uncharacterized protein from Schizosaccharomyces pombe (strain 972 / ATCC 24843) (Fission yeast).